Consider the following 522-residue polypeptide: Stellatic acid synthase (522 aa).

The helical transmembrane segment at 23–43 (IYGIYEPLLALFAVYSVAVVV) threads the bilayer. Asn-267 and Asn-451 each carry an N-linked (GlcNAc...) asparagine glycan. Cys-464 is a heme binding site. The N-linked (GlcNAc...) asparagine glycan is linked to Asn-495.

Belongs to the cytochrome P450 family. Heme is required as a cofactor.

It localises to the membrane. The enzyme catalyses stellata-2,6,19-triene + 3 reduced [NADPH--hemoprotein reductase] + 3 O2 = stellatate + 3 oxidized [NADPH--hemoprotein reductase] + 4 H2O + 4 H(+). The protein operates within secondary metabolite biosynthesis; terpenoid biosynthesis. In terms of biological role, cytochrome P450 monooxygenase; part of the gene cluster that mediates the biosynthesis of the sesterterpene stellatic acid. The first step in the pathway is performed by the stellatatriene synthase that possesses both prenyl transferase and terpene cyclase activity, converting isopentenyl diphosphate and dimethylallyl diphosphate into geranylgeranyl diphosphate (GGDP) and then converting GGDP into stellata-2,6,19-triene. The cytochrome P450 monooxygenase Stl-P450 then catalyzes three successive oxidation reactions on the C-20 methyl group to generate the carboxylic acid of stellatic acid. The protein is Stellatic acid synthase of Emericella variicolor (Aspergillus stellatus).